The primary structure comprises 562 residues: Ikaros family zinc finger protein (562 aa).

C2H2-type zinc fingers lie at residues I45 to H67, F73 to H95, and F101 to H123. The C2H2-type 4; degenerate zinc finger occupies Y129 to P152. Disordered regions lie at residues N178 to P210, Q293 to T342, Q361 to D404, and D451 to D473. Residues P307–S326 show a composition bias toward low complexity. Residues G327–E336 show a composition bias toward polar residues. Residues D369–P383 are compositionally biased toward basic and acidic residues. Positions E456–T471 are enriched in polar residues. C2H2-type zinc fingers lie at residues W494–H516 and L522–H546.

It belongs to the Ikaros C2H2-type zinc-finger protein family. As to expression, expression is strongest in the anterior Fol cells of the oikoplastic epithelium.

The protein localises to the nucleus. In Oikopleura dioica (Tunicate), this protein is Ikaros family zinc finger protein.